The following is a 210-amino-acid chain: Uracil phosphoribosyltransferase (210 aa).

5-phospho-alpha-D-ribose 1-diphosphate is bound by residues R78, R103, and 130 to 138 (DPMLATGGT). Uracil contacts are provided by residues I193 and 198 to 200 (GDA). Residue D199 coordinates 5-phospho-alpha-D-ribose 1-diphosphate.

The protein belongs to the UPRTase family. Mg(2+) is required as a cofactor.

The catalysed reaction is UMP + diphosphate = 5-phospho-alpha-D-ribose 1-diphosphate + uracil. Its pathway is pyrimidine metabolism; UMP biosynthesis via salvage pathway; UMP from uracil: step 1/1. Allosterically activated by GTP. Catalyzes the conversion of uracil and 5-phospho-alpha-D-ribose 1-diphosphate (PRPP) to UMP and diphosphate. This chain is Uracil phosphoribosyltransferase, found in Xanthomonas euvesicatoria pv. vesicatoria (strain 85-10) (Xanthomonas campestris pv. vesicatoria).